Reading from the N-terminus, the 290-residue chain is Pyridoxal 5'-phosphate synthase subunit PdxS (290 aa).

D22 is a binding site for D-ribose 5-phosphate. K79 serves as the catalytic Schiff-base intermediate with D-ribose 5-phosphate. G151 is a D-ribose 5-phosphate binding site. R163 provides a ligand contact to D-glyceraldehyde 3-phosphate. D-ribose 5-phosphate is bound by residues G212 and 233–234; that span reads GS.

Belongs to the PdxS/SNZ family. In the presence of PdxT, forms a dodecamer of heterodimers.

It catalyses the reaction aldehydo-D-ribose 5-phosphate + D-glyceraldehyde 3-phosphate + L-glutamine = pyridoxal 5'-phosphate + L-glutamate + phosphate + 3 H2O + H(+). Its pathway is cofactor biosynthesis; pyridoxal 5'-phosphate biosynthesis. In terms of biological role, catalyzes the formation of pyridoxal 5'-phosphate from ribose 5-phosphate (RBP), glyceraldehyde 3-phosphate (G3P) and ammonia. The ammonia is provided by the PdxT subunit. Can also use ribulose 5-phosphate and dihydroxyacetone phosphate as substrates, resulting from enzyme-catalyzed isomerization of RBP and G3P, respectively. The polypeptide is Pyridoxal 5'-phosphate synthase subunit PdxS (Clostridium botulinum (strain Langeland / NCTC 10281 / Type F)).